Consider the following 185-residue polypeptide: Ribonuclease HII (185 aa).

Positions M1 to L185 constitute an RNase H type-2 domain. A divalent metal cation contacts are provided by D7, E8, and D99.

The protein belongs to the RNase HII family. The cofactor is Mn(2+). Requires Mg(2+) as cofactor.

It localises to the cytoplasm. It carries out the reaction Endonucleolytic cleavage to 5'-phosphomonoester.. Its function is as follows. Endonuclease that specifically degrades the RNA of RNA-DNA hybrids. In Francisella philomiragia subsp. philomiragia (strain ATCC 25017 / CCUG 19701 / FSC 153 / O#319-036), this protein is Ribonuclease HII.